The sequence spans 271 residues: NAD kinase (271 aa).

The Proton acceptor role is filled by Asp64. Residues 64 to 65, Arg69, 132 to 133, Lys143, Arg160, Asp162, 173 to 178, Ala197, and Gln231 contribute to the NAD(+) site; these read DG, NE, and TAYAMS.

It belongs to the NAD kinase family. A divalent metal cation is required as a cofactor.

The protein localises to the cytoplasm. It catalyses the reaction NAD(+) + ATP = ADP + NADP(+) + H(+). Its function is as follows. Involved in the regulation of the intracellular balance of NAD and NADP, and is a key enzyme in the biosynthesis of NADP. Catalyzes specifically the phosphorylation on 2'-hydroxyl of the adenosine moiety of NAD to yield NADP. The polypeptide is NAD kinase (Methanocorpusculum labreanum (strain ATCC 43576 / DSM 4855 / Z)).